The following is a 257-amino-acid chain: Probable amino-acid ABC transporter ATP-binding protein HI_1078 (257 aa).

One can recognise an ABC transporter domain in the interval 4-244 (LKVSNIQKNF…PQHERTKQFL (241 aa)). 36-43 (GPSGSGKT) serves as a coordination point for ATP.

Belongs to the ABC transporter superfamily.

It is found in the cell inner membrane. Its function is as follows. Probably part of a binding-protein-dependent transport system for an amino acid. Probably responsible for energy coupling to the transport system. The sequence is that of Probable amino-acid ABC transporter ATP-binding protein HI_1078 from Haemophilus influenzae (strain ATCC 51907 / DSM 11121 / KW20 / Rd).